We begin with the raw amino-acid sequence, 358 residues long: MIGKIKKFNFKSLLILNTFALIATSYLFNNFIFIGVYTLFFFISLFTTKNGIKIIKKLNLLQNIRTEGPANHLKKSDTPTMGGVFMVIPFLIFLLIININLGSLKLFLLLLTIFGFFITGFVDDFLSIKKEQNTGLKTKEKFFLQSIIAIIFIFLAYEKDLINPLITVSDSWQINMNIFTLPISFLVLVGISNSVNLTDGLDGLAAGCSGIVFYGLGTEILMKEQQELIIFSILCYSMSGICLGFLKYNSYPAKIFMGDTGSLSIGAILGSIALLTNSVFTLSIFSGIFIIESLSVMIQVGVFKITKKLFHNGKRIFLMAPLHHHFELKGVKEQKIVENFWKINILLVILGIVLKINL.

A run of 9 helical transmembrane segments spans residues 13-35, 81-101, 106-126, 142-162, 171-191, 201-221, 228-248, 268-290, and 336-356; these read LLIL…IFIG, MGGV…NINL, LFLL…DDFL, FFLQ…KDLI, SWQI…LVGI, LDGL…TEIL, LIIF…FLKY, ILGS…GIFI, and IVEN…VLKI.

The protein belongs to the glycosyltransferase 4 family. MraY subfamily. Mg(2+) is required as a cofactor.

The protein localises to the cell inner membrane. The enzyme catalyses UDP-N-acetyl-alpha-D-muramoyl-L-alanyl-gamma-D-glutamyl-meso-2,6-diaminopimeloyl-D-alanyl-D-alanine + di-trans,octa-cis-undecaprenyl phosphate = di-trans,octa-cis-undecaprenyl diphospho-N-acetyl-alpha-D-muramoyl-L-alanyl-D-glutamyl-meso-2,6-diaminopimeloyl-D-alanyl-D-alanine + UMP. Its pathway is cell wall biogenesis; peptidoglycan biosynthesis. In terms of biological role, catalyzes the initial step of the lipid cycle reactions in the biosynthesis of the cell wall peptidoglycan: transfers peptidoglycan precursor phospho-MurNAc-pentapeptide from UDP-MurNAc-pentapeptide onto the lipid carrier undecaprenyl phosphate, yielding undecaprenyl-pyrophosphoryl-MurNAc-pentapeptide, known as lipid I. In Prochlorococcus marinus (strain MIT 9312), this protein is Phospho-N-acetylmuramoyl-pentapeptide-transferase.